A 468-amino-acid polypeptide reads, in one-letter code: Putative amidase AmiC (468 aa).

Catalysis depends on charge relay system residues Lys-80 and Ser-155. Ser-179 functions as the Acyl-ester intermediate in the catalytic mechanism.

Belongs to the amidase family.

The catalysed reaction is a monocarboxylic acid amide + H2O = a monocarboxylate + NH4(+). The sequence is that of Putative amidase AmiC (amiC) from Mycobacterium leprae (strain TN).